Here is a 74-residue protein sequence, read N- to C-terminus: Putative defensin-like protein 12 (74 aa).

The first 26 residues, 1–26 (MAKPCAAFLVFLCLSMLILSIPDISC), serve as a signal peptide directing secretion. Intrachain disulfides connect C26-C50, C33-C59, and C39-C61.

It belongs to the DEFL family.

It localises to the secreted. The sequence is that of Putative defensin-like protein 12 from Arabidopsis thaliana (Mouse-ear cress).